The following is a 126-amino-acid chain: UPF0102 protein P9303_16141 (126 aa).

Belongs to the UPF0102 family.

The chain is UPF0102 protein P9303_16141 from Prochlorococcus marinus (strain MIT 9303).